Consider the following 179-residue polypeptide: Segregation and condensation protein B (179 aa).

This sequence belongs to the ScpB family. In terms of assembly, homodimer. Homodimerization may be required to stabilize the binding of ScpA to the Smc head domains. Component of a cohesin-like complex composed of ScpA, ScpB and the Smc homodimer, in which ScpA and ScpB bind to the head domain of Smc. The presence of the three proteins is required for the association of the complex with DNA.

Its subcellular location is the cytoplasm. Participates in chromosomal partition during cell division. May act via the formation of a condensin-like complex containing Smc and ScpA that pull DNA away from mid-cell into both cell halves. The chain is Segregation and condensation protein B from Staphylococcus haemolyticus (strain JCSC1435).